Consider the following 149-residue polypeptide: Small ribosomal subunit protein uS15 (149 aa).

Residues 1-14 are compositionally biased toward basic residues; sequence MGRMHTHRHGKSHS. The disordered stretch occupies residues 1 to 20; sequence MGRMHTHRHGKSHSIRPATL.

It belongs to the universal ribosomal protein uS15 family. As to quaternary structure, part of the 30S ribosomal subunit.

The chain is Small ribosomal subunit protein uS15 from Nitrosopumilus maritimus (strain SCM1).